Reading from the N-terminus, the 178-residue chain is Translation initiation factor IF-3 (178 aa).

The segment at 1–20 (MRRPFRATPVQKDGPRSNRD) is disordered.

Belongs to the IF-3 family. In terms of assembly, monomer.

The protein resides in the cytoplasm. Its function is as follows. IF-3 binds to the 30S ribosomal subunit and shifts the equilibrium between 70S ribosomes and their 50S and 30S subunits in favor of the free subunits, thus enhancing the availability of 30S subunits on which protein synthesis initiation begins. The chain is Translation initiation factor IF-3 from Brucella abortus biovar 1 (strain 9-941).